The sequence spans 98 residues: NADH-ubiquinone oxidoreductase chain 4L (98 aa).

The next 3 membrane-spanning stretches (helical) occupy residues 2-22 (LSISININLAFAAALLGMLMF), 29-49 (SLLCLEGMMLSMFILSTLIIL), and 61-81 (ILLLVFAACEAAIGLALLVMV).

This sequence belongs to the complex I subunit 4L family. As to quaternary structure, core subunit of respiratory chain NADH dehydrogenase (Complex I) which is composed of 45 different subunits.

The protein resides in the mitochondrion inner membrane. It catalyses the reaction a ubiquinone + NADH + 5 H(+)(in) = a ubiquinol + NAD(+) + 4 H(+)(out). In terms of biological role, core subunit of the mitochondrial membrane respiratory chain NADH dehydrogenase (Complex I) which catalyzes electron transfer from NADH through the respiratory chain, using ubiquinone as an electron acceptor. Part of the enzyme membrane arm which is embedded in the lipid bilayer and involved in proton translocation. The protein is NADH-ubiquinone oxidoreductase chain 4L (MT-ND4L) of Microcebus ravelobensis (Golden-brown mouse lemur).